The following is a 648-amino-acid chain: Bifunctional protein TilS/HprT (648 aa).

29-34 (SGGPDS) serves as a coordination point for ATP. Residue Asp627 coordinates Mg(2+).

It in the N-terminal section; belongs to the tRNA(Ile)-lysidine synthase family. The protein in the C-terminal section; belongs to the purine/pyrimidine phosphoribosyltransferase family. Requires Mg(2+) as cofactor.

The protein localises to the cytoplasm. It carries out the reaction IMP + diphosphate = hypoxanthine + 5-phospho-alpha-D-ribose 1-diphosphate. The catalysed reaction is GMP + diphosphate = guanine + 5-phospho-alpha-D-ribose 1-diphosphate. The enzyme catalyses cytidine(34) in tRNA(Ile2) + L-lysine + ATP = lysidine(34) in tRNA(Ile2) + AMP + diphosphate + H(+). Ligates lysine onto the cytidine present at position 34 of the AUA codon-specific tRNA(Ile) that contains the anticodon CAU, in an ATP-dependent manner. Cytidine is converted to lysidine, thus changing the amino acid specificity of the tRNA from methionine to isoleucine. In Listeria innocua serovar 6a (strain ATCC BAA-680 / CLIP 11262), this protein is Bifunctional protein TilS/HprT (tilS/hprT).